Here is an 883-residue protein sequence, read N- to C-terminus: Phosphoenolpyruvate carboxylase (883 aa).

Active-site residues include His138 and Lys546.

Belongs to the PEPCase type 1 family. It depends on Mg(2+) as a cofactor.

The catalysed reaction is oxaloacetate + phosphate = phosphoenolpyruvate + hydrogencarbonate. Forms oxaloacetate, a four-carbon dicarboxylic acid source for the tricarboxylic acid cycle. This is Phosphoenolpyruvate carboxylase from Salmonella schwarzengrund (strain CVM19633).